Reading from the N-terminus, the 313-residue chain is Olfactory receptor 1f45 (313 aa).

Residues 1 to 25 (MSSTNQSSVTEFLLLGLSRQPQQQQ) are Extracellular-facing. The N-linked (GlcNAc...) asparagine glycan is linked to Asn5. The chain crosses the membrane as a helical span at residues 26–50 (LLFLLFLIMYLATVLGNLLIILAIG). The Cytoplasmic portion of the chain corresponds to 51–57 (TDSRLHT). Residues 58–79 (PMYFFLSNLSFVDVCFSSTTVP) form a helical membrane-spanning segment. Over 80–100 (KVLANHILGSQAISFSGCLTQ) the chain is Extracellular. A disulfide bridge connects residues Cys97 and Cys189. The chain crosses the membrane as a helical span at residues 101-120 (LYFLAVFGNMDNFLLAVMSY). Residues 121–139 (DRFVAICHPLHYTTKMTRQ) lie on the Cytoplasmic side of the membrane. The helical transmembrane segment at 140-158 (LCVLLVVGSWVVANMNCLL) threads the bilayer. Residues 159-196 (HILLMARLSFCADNMIPHFFCDGTPLLKLSCSDTHLNE) lie on the Extracellular side of the membrane. Residues 197–219 (LMILTEGAVVMVTPFVCILISYI) form a helical membrane-spanning segment. The Cytoplasmic portion of the chain corresponds to 220–236 (HITCAVLRVSSPRGGWK). A helical membrane pass occupies residues 237-260 (SFSTCGSHLAVVCLFYGTVIAVYF). Over 261–272 (NPSSSHLAGRDM) the chain is Extracellular. Residues 273–292 (AAAVMYAVVTPMLNPFIYSL) traverse the membrane as a helical segment. Residues 293 to 313 (RNSDMKAALRKVLAMRFPSKQ) are Cytoplasmic-facing.

Belongs to the G-protein coupled receptor 1 family. Olfactory epithelium.

It is found in the cell membrane. Functionally, odorant receptor. The chain is Olfactory receptor 1f45 (Or1f45) from Rattus norvegicus (Rat).